We begin with the raw amino-acid sequence, 178 residues long: Imidazoleglycerol-phosphate dehydratase (178 aa).

This sequence belongs to the imidazoleglycerol-phosphate dehydratase family.

It localises to the cytoplasm. It catalyses the reaction D-erythro-1-(imidazol-4-yl)glycerol 3-phosphate = 3-(imidazol-4-yl)-2-oxopropyl phosphate + H2O. It functions in the pathway amino-acid biosynthesis; L-histidine biosynthesis; L-histidine from 5-phospho-alpha-D-ribose 1-diphosphate: step 6/9. The chain is Imidazoleglycerol-phosphate dehydratase from Archaeoglobus fulgidus (strain ATCC 49558 / DSM 4304 / JCM 9628 / NBRC 100126 / VC-16).